A 155-amino-acid polypeptide reads, in one-letter code: 6,7-dimethyl-8-ribityllumazine synthase (155 aa).

5-amino-6-(D-ribitylamino)uracil-binding positions include tryptophan 24, 58 to 60, and 82 to 84; these read AFE and AVI. 87 to 88 is a binding site for (2S)-2-hydroxy-3-oxobutyl phosphate; the sequence is GT. Histidine 90 functions as the Proton donor in the catalytic mechanism. Phenylalanine 115 lines the 5-amino-6-(D-ribitylamino)uracil pocket. Arginine 129 lines the (2S)-2-hydroxy-3-oxobutyl phosphate pocket.

This sequence belongs to the DMRL synthase family. As to quaternary structure, forms an icosahedral capsid composed of 60 subunits, arranged as a dodecamer of pentamers.

It catalyses the reaction (2S)-2-hydroxy-3-oxobutyl phosphate + 5-amino-6-(D-ribitylamino)uracil = 6,7-dimethyl-8-(1-D-ribityl)lumazine + phosphate + 2 H2O + H(+). Its pathway is cofactor biosynthesis; riboflavin biosynthesis; riboflavin from 2-hydroxy-3-oxobutyl phosphate and 5-amino-6-(D-ribitylamino)uracil: step 1/2. In terms of biological role, catalyzes the formation of 6,7-dimethyl-8-ribityllumazine by condensation of 5-amino-6-(D-ribitylamino)uracil with 3,4-dihydroxy-2-butanone 4-phosphate. This is the penultimate step in the biosynthesis of riboflavin. This Teredinibacter turnerae (strain ATCC 39867 / T7901) protein is 6,7-dimethyl-8-ribityllumazine synthase.